We begin with the raw amino-acid sequence, 103 residues long: UPF0235 protein Rleg2_3707 (103 aa).

The protein belongs to the UPF0235 family.

The chain is UPF0235 protein Rleg2_3707 from Rhizobium leguminosarum bv. trifolii (strain WSM2304).